The primary structure comprises 312 residues: Ribosomal protein L11 methyltransferase (312 aa).

S-adenosyl-L-methionine-binding residues include Thr-163, Gly-184, Asp-206, and Asn-248.

This sequence belongs to the methyltransferase superfamily. PrmA family.

The protein resides in the cytoplasm. The catalysed reaction is L-lysyl-[protein] + 3 S-adenosyl-L-methionine = N(6),N(6),N(6)-trimethyl-L-lysyl-[protein] + 3 S-adenosyl-L-homocysteine + 3 H(+). Methylates ribosomal protein L11. In Clostridium botulinum (strain Hall / ATCC 3502 / NCTC 13319 / Type A), this protein is Ribosomal protein L11 methyltransferase.